Consider the following 94-residue polypeptide: Late cornified envelope-like proline-rich protein 1 (94 aa).

2 disordered regions span residues 1 to 26 (MSSD…CEQK) and 47 to 94 (CPRE…PPPE). A compositionally biased stretch (pro residues) spans 53–94 (PAPPKCPPCPSPSPSSCPPKPCAKPCPPKCPSSCPPPCPPPE).

This sequence belongs to the cornifin (SPRR) family.

The sequence is that of Late cornified envelope-like proline-rich protein 1 (LELP1) from Macaca fascicularis (Crab-eating macaque).